The following is a 101-amino-acid chain: Gastrin (101 aa).

A signal peptide spans 1-21 (MQRLCVYVLIFALALAAFSEA). The interval 22 to 82 (SWKPRSQQPD…SKKQGPWLEE (61 aa)) is disordered. Position 59 is a pyrrolidone carboxylic acid; in form big gastrin (Gln-59). Pyrrolidone carboxylic acid; in form gastrin is present on Gln-76. A Sulfotyrosine; partial modification is found at Tyr-87. A Phenylalanine amide modification is found at Phe-92. The residue at position 96 (Ser-96) is a Phosphoserine. The propeptide at 96–101 (SAEDEN) is removed in mature form.

It belongs to the gastrin/cholecystokinin family. Post-translationally, two different processing pathways probably exist in antral G-cells. In the dominant pathway progastrin is cleaved at three sites resulting in two major bioactive gastrins, gastrin-34 and gastrin-17. In the putative alternative pathway, progastrin may be processed only at the most C-terminal dibasic site resulting in the synthesis of gastrin-71. Sulfation enhances proteolytic processing, and blocks peptide degradation. Levels of sulfation differ between proteolytically-cleaved gastrins. Thus, gastrin-6 is almost 73% sulfated, whereas the larger gastrins are less than 50% sulfated. Sulfation levels are also tissue-specific.

It is found in the secreted. Functionally, gastrin stimulates the stomach mucosa to produce and secrete hydrochloric acid and the pancreas to secrete its digestive enzymes. It also stimulates smooth muscle contraction and increases blood circulation and water secretion in the stomach and intestine. In Homo sapiens (Human), this protein is Gastrin (GAST).